We begin with the raw amino-acid sequence, 800 residues long: Internalin A (800 aa).

The first 35 residues, Met1–Ala35, serve as a signal peptide directing secretion. The region spanning Ala36–Asp76 is the LRRNT domain. LRR repeat units lie at residues Gln77 to Asn98, Asn99 to Thr120, Lys121 to Thr142, Asn143 to Thr164, Asn165 to Thr186, Asn187 to Thr207, Thr208 to Thr229, Asn230 to Thr251, Asn252 to Thr273, Asn274 to Thr295, Lys296 to Thr317, Ala318 to Lys339, Asn340 to Thr361, Lys362 to Thr383, and Asn384 to Thr405. The region spanning Ala416–Asp505 is the LRRCT domain. A B-1 repeat occupies Leu518–Gly587. Positions Leu518–Asn706 are 3 X approximate tandem repeats, type B. One copy of the B-2 repeat lies at Leu588–Gly657. A B-3 repeat occupies Leu658 to Asn706. The interval Lys705–Tyr757 is disordered. The segment covering Pro711–Thr753 has biased composition (low complexity). The LPXTG sorting signal motif lies at Leu767–Gly771. Thr770 bears the Pentaglycyl murein peptidoglycan amidated threonine mark. Residues Gly771 to Lys800 constitute a propeptide, removed by sortase A.

Belongs to the internalin family.

Its subcellular location is the secreted. It is found in the cell wall. In terms of biological role, mediates the entry of Listeria monocytogenes into cells. Binds to host receptor cadherin-1 (E-cadherin, CDH1). The sequence is that of Internalin A (inlA) from Listeria monocytogenes serotype 1/2a (strain 10403S).